A 350-amino-acid chain; its full sequence is Outer membrane porin PhoE (350 aa).

A signal peptide spans 1–21 (MKKSTLALVVMGVVASASVHA).

Belongs to the Gram-negative porin family. In terms of assembly, homotrimer.

Its subcellular location is the cell outer membrane. Uptake of inorganic phosphate, phosphorylated compounds, and some other negatively charged solutes. The protein is Outer membrane porin PhoE (phoE) of Enterobacter cloacae.